Reading from the N-terminus, the 372-residue chain is N-methyl-L-tryptophan oxidase (372 aa).

Residue 4–34 participates in FAD binding; that stretch reads DLIIIGSGSVGAAAGYYATRAGLKVLMTDAH. C307 is modified (S-8alpha-FAD cysteine).

Belongs to the MSOX/MTOX family. MTOX subfamily. As to quaternary structure, monomer. The cofactor is FAD.

The catalysed reaction is N(alpha)-methyl-L-tryptophan + O2 + H2O = L-tryptophan + formaldehyde + H2O2. Its function is as follows. Catalyzes the oxidative demethylation of N-methyl-L-tryptophan. The sequence is that of N-methyl-L-tryptophan oxidase from Salmonella dublin (strain CT_02021853).